We begin with the raw amino-acid sequence, 812 residues long: Plasminogen (812 aa).

An N-terminal signal peptide occupies residues 1-19 (MDHKEVILLFLLLLKPGQG). The PAN domain maps to 20–98 (DSLDGYISTQ…RDVILFEKRV (79 aa)). Disulfide bonds link cysteine 49–cysteine 73, cysteine 53–cysteine 61, cysteine 103–cysteine 181, cysteine 124–cysteine 164, cysteine 152–cysteine 176, cysteine 185–cysteine 262, cysteine 188–cysteine 316, cysteine 206–cysteine 245, cysteine 234–cysteine 257, cysteine 275–cysteine 352, cysteine 296–cysteine 335, cysteine 324–cysteine 347, cysteine 377–cysteine 454, cysteine 398–cysteine 437, cysteine 426–cysteine 449, cysteine 481–cysteine 560, cysteine 502–cysteine 543, cysteine 531–cysteine 555, cysteine 568–cysteine 687, cysteine 578–cysteine 586, and cysteine 609–cysteine 625. Kringle domains lie at 103-181 (CKTG…IPEC), 184-262 (ECMY…IPRC), 275-352 (CLKG…IPSC), 377-454 (CYQS…LKRC), and 481-560 (CMYG…IPLC). In terms of domain architecture, Peptidase S1 spans 582–810 (VVGGCVANPH…FVDWIEREMR (229 aa)). Serine 598 is subject to Phosphoserine. Residues histidine 624 and aspartate 667 each act as charge relay system in the active site. Serine 690 is subject to Phosphoserine. 3 cysteine pairs are disulfide-bonded: cysteine 701–cysteine 768, cysteine 731–cysteine 747, and cysteine 758–cysteine 786. Serine 762 acts as the Charge relay system in catalysis.

This sequence belongs to the peptidase S1 family. Plasminogen subfamily. In terms of assembly, interacts (both mature PLG and the angiostatin peptide) with AMOT and CSPG4. Interacts (via the Kringle domains) with HRG; the interaction tethers PLG to the cell surface and enhances its activation. Interacts (via Kringle 4 domain) with ADA; the interaction stimulates PLG activation when in complex with DPP4. Angiostatin: Interacts with ATP5F1A; the interaction inhibits most of the angiogenic effects of angiostatin. In terms of processing, in the presence of the inhibitor, the activation involves only cleavage after Arg-581, yielding two chains held together by two disulfide bonds. In the absence of the inhibitor, the activation involves additionally the removal of the activation peptide.

The protein resides in the secreted. It carries out the reaction Preferential cleavage: Lys-|-Xaa &gt; Arg-|-Xaa, higher selectivity than trypsin. Converts fibrin into soluble products.. Converted into plasmin by plasminogen activators, both plasminogen and its activator being bound to fibrin. Cannot be activated with streptokinase. Its function is as follows. Plasmin dissolves the fibrin of blood clots and acts as a proteolytic factor in a variety of other processes including embryonic development, tissue remodeling, tumor invasion, and inflammation. In ovulation, weakens the walls of the Graafian follicle. It activates the urokinase-type plasminogen activator, collagenases and several complement zymogens, such as C1, C4 and C5. Cleavage of fibronectin and laminin leads to cell detachment and apoptosis. Also cleaves fibrin, thrombospondin and von Willebrand factor. Its role in tissue remodeling and tumor invasion may be modulated by CSPG4. Binds to cells. In terms of biological role, angiostatin is an angiogenesis inhibitor that blocks neovascularization and growth of experimental primary and metastatic tumors in vivo. The sequence is that of Plasminogen (Plg) from Mus musculus (Mouse).